A 415-amino-acid polypeptide reads, in one-letter code: Multifunctional CCA protein (415 aa).

ATP is bound by residues G8 and R11. CTP contacts are provided by G8 and R11. Residues D21 and D23 each contribute to the Mg(2+) site. ATP contacts are provided by R91, R137, and R140. Positions 91, 137, and 140 each coordinate CTP. The region spanning 228–329 (TGIHTLMTLA…VGLFDSIDAW (102 aa)) is the HD domain.

This sequence belongs to the tRNA nucleotidyltransferase/poly(A) polymerase family. Bacterial CCA-adding enzyme type 1 subfamily. Monomer. Can also form homodimers and oligomers. Mg(2+) is required as a cofactor. It depends on Ni(2+) as a cofactor.

The enzyme catalyses a tRNA precursor + 2 CTP + ATP = a tRNA with a 3' CCA end + 3 diphosphate. The catalysed reaction is a tRNA with a 3' CCA end + 2 CTP + ATP = a tRNA with a 3' CCACCA end + 3 diphosphate. In terms of biological role, catalyzes the addition and repair of the essential 3'-terminal CCA sequence in tRNAs without using a nucleic acid template. Adds these three nucleotides in the order of C, C, and A to the tRNA nucleotide-73, using CTP and ATP as substrates and producing inorganic pyrophosphate. tRNA 3'-terminal CCA addition is required both for tRNA processing and repair. Also involved in tRNA surveillance by mediating tandem CCA addition to generate a CCACCA at the 3' terminus of unstable tRNAs. While stable tRNAs receive only 3'-terminal CCA, unstable tRNAs are marked with CCACCA and rapidly degraded. This Cronobacter sakazakii (strain ATCC BAA-894) (Enterobacter sakazakii) protein is Multifunctional CCA protein.